A 258-amino-acid polypeptide reads, in one-letter code: MKDIQSTPAQIAFPIDRVGVKGLKFPIQIQTRDIGMQHTVAIVDMGVDLSVSSRGTHMSRFVEVLQDWNEPLCCESLERLVKQTQKKLQSQHAYIAFFFPYFLHKRAPSTNMLSLFSYDCKLSAKSINYNIEFILELTVPVMTVCPCSKAISHEGAHSQRSEIYIQLRLEQFRFIEDFIVLAESSASSPLYSLLKRADEKYVTEDAFAHPKFVEDVVRNISSKLITVTDVLGFRVEVESFESIHAHNAFAYIEHEFIC.

It belongs to the GTP cyclohydrolase IV family.

It carries out the reaction GTP + H2O = 7,8-dihydroneopterin 3'-triphosphate + formate + H(+). The protein operates within cofactor biosynthesis; 7,8-dihydroneopterin triphosphate biosynthesis; 7,8-dihydroneopterin triphosphate from GTP: step 1/1. Functionally, converts GTP to 7,8-dihydroneopterin triphosphate. The protein is GTP cyclohydrolase FolE2 of Lawsonia intracellularis (strain PHE/MN1-00).